The following is an 888-amino-acid chain: Valine--tRNA ligase (888 aa).

Positions 43–53 (PNVTGTLHLGH) match the 'HIGH' region motif. A 'KMSKS' region motif is present at residues 538 to 542 (KMSKS). Position 541 (K541) interacts with ATP. A coiled-coil region spans residues 821 to 888 (LIDLDAERAR…RLKAALGRLA (68 aa)).

This sequence belongs to the class-I aminoacyl-tRNA synthetase family. ValS type 1 subfamily. Monomer.

It is found in the cytoplasm. It catalyses the reaction tRNA(Val) + L-valine + ATP = L-valyl-tRNA(Val) + AMP + diphosphate. In terms of biological role, catalyzes the attachment of valine to tRNA(Val). As ValRS can inadvertently accommodate and process structurally similar amino acids such as threonine, to avoid such errors, it has a 'posttransfer' editing activity that hydrolyzes mischarged Thr-tRNA(Val) in a tRNA-dependent manner. The chain is Valine--tRNA ligase from Gluconobacter oxydans (strain 621H) (Gluconobacter suboxydans).